A 327-amino-acid chain; its full sequence is Dipeptide transport ATP-binding protein DppF (327 aa).

The 250-residue stretch at 12–261 (LNAIGLKKYY…PQHPYTKALL (250 aa)) folds into the ABC transporter domain. 54-61 (GESGCGKS) contacts ATP.

It belongs to the ABC transporter superfamily.

Its subcellular location is the cell inner membrane. It carries out the reaction a dipeptide(out) + ATP + H2O = a dipeptide(in) + ADP + phosphate + H(+). Functionally, part of the ABC transporter DppBCDF involved in dipeptide transport. Responsible for energy coupling to the transport system. In Haemophilus influenzae (strain ATCC 51907 / DSM 11121 / KW20 / Rd), this protein is Dipeptide transport ATP-binding protein DppF (dppF).